The following is a 247-amino-acid chain: UPF0246 protein LSEI_2080 (247 aa).

Belongs to the UPF0246 family.

The protein is UPF0246 protein LSEI_2080 of Lacticaseibacillus paracasei (strain ATCC 334 / BCRC 17002 / CCUG 31169 / CIP 107868 / KCTC 3260 / NRRL B-441) (Lactobacillus paracasei).